We begin with the raw amino-acid sequence, 569 residues long: MGGHEGFSNQRLSSATWFSHFRASALRSKSLPPPSSQTAVRSTSGDSLVRRLGLFDLILLGVGASIGAGVFVVTGTVARDAGPGVTISFLLAGASCVLNALCYAELSSRFPAVVGGAYMYSYSAFNEITAFLVFVQLMLDYHIGAASISRSLASYAVALLELFPALKGSIPLWMGSGKELLGGLLSLNILAPILLALLTLVLCQGVRESSAVNSVMTATKVVIVLVVICAGAFEIDVANWSPFAPNGFKAVLTGATVVFFSYVGFDAVANSAEESKNPQRDLPIGIMGSLLVCISLYIGVCLVLTGMVPFSLLSEDAPLAEAFSSKGMKFVSILISIGAVAGLTTTLLVGLYVQSRLYLGLGRDGLLPSIFSRIHPTLHTPLHSQIWCGIVAGVLAGIFNVHSLSHILSVGTLTGYSVVAACVVALRLNDKKDRESSNRWTSSWQEGVICLVIIACSGFGAGVFYRFSASVIFILLSVGVAVVASAVLHYRQAYALPLGSGFSCPGVPIVPSVCIFFNIFLFAQLHYEAWIRFVVVSVLATAVYALYGQYHADPSMLDYQRAPETESDA.

A chloroplast-targeting transit peptide spans 1–41 (MGGHEGFSNQRLSSATWFSHFRASALRSKSLPPPSSQTAVR). 14 helical membrane passes run 53–73 (GLFDLILLGVGASIGAGVFVV), 81–101 (AGPGVTISFLLAGASCVLNAL), 113–135 (VVGGAYMYSYSAFNEITAFLVFV), 155–175 (YAVALLELFPALKGSIPLWMG), 181–201 (LGGLLSLNILAPILLALLTLV), 215–235 (VMTATKVVIVLVVICAGAFEI), 250–270 (AVLTGATVVFFSYVGFDAVAN), 284–304 (IGIMGSLLVCISLYIGVCLVL), 333–353 (ILISIGAVAGLTTTLLVGLYV), 406–428 (HILSVGTLTGYSVVAACVVALRL), 444–464 (WQEGVICLVIIACSGFGAGVF), 467–487 (FSASVIFILLSVGVAVVASAV), 502–522 (FSCPGVPIVPSVCIFFNIFLF), and 528–548 (EAWIRFVVVSVLATAVYALYG).

It belongs to the amino acid-polyamine-organocation (APC) superfamily. Cationic amino acid transporter (CAT) (TC 2.A.3.3) family. Expressed in roots, stems, flowers, and leaves.

Its subcellular location is the plastid. It is found in the chloroplast membrane. In terms of biological role, permease involved in the transport of the cationic amino acids. The chain is Cationic amino acid transporter 9, chloroplastic (CAT9) from Arabidopsis thaliana (Mouse-ear cress).